We begin with the raw amino-acid sequence, 156 residues long: MPRKGPVAKRDVLPDPMYNSKLVTRLINKMMVDGKKGKSQTILYNAFEIVRERSDKEPMEVFEQALKNIMPVLEVRARRVGGANYQVPVEVRPERRTTLGLRWLVNYARLRGEKTMEERLAYEILDASNNAGAAVKKREDTHKMAEANKAFAHYRW.

The protein belongs to the universal ribosomal protein uS7 family. In terms of assembly, part of the 30S ribosomal subunit. Contacts proteins S9 and S11.

One of the primary rRNA binding proteins, it binds directly to 16S rRNA where it nucleates assembly of the head domain of the 30S subunit. Is located at the subunit interface close to the decoding center, probably blocks exit of the E-site tRNA. The sequence is that of Small ribosomal subunit protein uS7 from Bacillus mycoides (strain KBAB4) (Bacillus weihenstephanensis).